Consider the following 22-residue polypeptide: MQYISLNTTIITTTETTGYGAG.

This sequence belongs to the thr operon leader peptide family.

Functionally, this protein is involved in control of the biosynthesis of threonine. In Yersinia enterocolitica serotype O:8 / biotype 1B (strain NCTC 13174 / 8081), this protein is thr operon leader peptide.